The sequence spans 119 residues: Cytochrome c55X (119 aa).

Positions 1–20 (MNAPPDFRRAASHALWLALA) are cleaved as a signal peptide. Cys51, Cys54, and His55 together coordinate heme c.

In terms of processing, binds 1 heme c group covalently per subunit.

The protein resides in the periplasm. In terms of biological role, monoheme c-type cytochrome. The polypeptide is Cytochrome c55X (nirC) (Pseudomonas aeruginosa (strain ATCC 15692 / DSM 22644 / CIP 104116 / JCM 14847 / LMG 12228 / 1C / PRS 101 / PAO1)).